Here is a 236-residue protein sequence, read N- to C-terminus: Proliferating cell nuclear antigen (236 aa).

A DNA-binding region spans residues 31–50 (RCDRNISMGMNLNNMAKMLK).

Belongs to the PCNA family.

The protein localises to the nucleus. Functionally, this protein is an auxiliary protein of DNA polymerase delta and is involved in the control of eukaryotic DNA replication by increasing the polymerase's processibility during elongation of the leading strand. This Glycine max (Soybean) protein is Proliferating cell nuclear antigen.